The sequence spans 271 residues: Glutamate racemase (271 aa).

Residues 10–11 and 42–43 each bind substrate; these read DS and YG. The active-site Proton donor/acceptor is cysteine 74. Residue 75–76 coordinates substrate; that stretch reads NT. Cysteine 189 functions as the Proton donor/acceptor in the catalytic mechanism. 190–191 serves as a coordination point for substrate; that stretch reads TH.

The protein belongs to the aspartate/glutamate racemases family.

It catalyses the reaction L-glutamate = D-glutamate. It participates in cell wall biogenesis; peptidoglycan biosynthesis. Provides the (R)-glutamate required for cell wall biosynthesis. This is Glutamate racemase from Bartonella bacilliformis (strain ATCC 35685 / KC583 / Herrer 020/F12,63).